The sequence spans 229 residues: Sodium channel modifier 1 (229 aa).

Phosphoserine is present on Ser-2. The Bipartite nuclear localization signal motif lies at 4–20 (KREGDDWSQLNVLKKRR). A Matrin-type zinc finger spans residues 42-74 (FACAICPHRPVLDTLAMLTAHRAGKKHLSSLKL). A Glycyl lysine isopeptide (Lys-Gly) (interchain with G-Cter in SUMO2) cross-link involves residue Lys-67. 2 disordered regions span residues 80-105 (QTGK…EAPL) and 128-187 (RRKH…TKRR). Residues 82–92 (GKGTEQNPRQQ) show a composition bias toward polar residues. Residues 157–171 (ISKEPEPRERSDAKE) show a composition bias toward basic and acidic residues. A phosphoserine mark is found at Ser-182 and Ser-218. The required for interaction with LUC7L2 stretch occupies residues 187–229 (RVLNHYLTLRSSGWVPDGRGRWIKDENVEFDSDEEEPPDLPLD).

As to quaternary structure, component of the minor spliceosome. Within this complex, interacts with RNF113A, as well as with SF3B1/SF3b155, SF3B2/SF3b145, SF3B3/SF3b130 and CDC5L. May interact with LUC7L2 and SNRNP70.

The protein localises to the nucleus. Its subcellular location is the nucleoplasm. The protein resides in the nucleus speckle. Its function is as follows. As a component of the minor spliceosome, involved in the splicing of U12-type introns in pre-mRNAs. Plays a role in the regulation of primary cilia length and Hedgehog signaling. The sequence is that of Sodium channel modifier 1 (Scnm1) from Mus musculus (Mouse).